The following is a 313-amino-acid chain: MNETDHKHITVLLHEAVDGLAIKPNGIYIDGTFGRGGHSRLILSRLATNGRLIAIDRDPCAIAEANTISDARFQIIHTAFSAIPEVCESLGLMGKIDGILLDLGVSSPQLDDAERGFSFMRDGPLDMRMDTTKGLSAAEWLAQVSIEDLAWVLKTFGEERFAKRIAQAVVSYNKTNSEKITRTLQLAKIIADAVPFKDKHKHPATRSFQAIRIFINRELDELEKALTNALRVLAPEGRLSIISFHSLEDRMVKQFMKKNSKGEVVPKGLPILEAELNKNIPLNIIGKAIMPSEAEIVANARSRSAVLRIAAKR.

S-adenosyl-L-methionine contacts are provided by residues 36–38 (GGH), aspartate 56, phenylalanine 80, aspartate 102, and glutamine 109.

The protein belongs to the methyltransferase superfamily. RsmH family.

It is found in the cytoplasm. The enzyme catalyses cytidine(1402) in 16S rRNA + S-adenosyl-L-methionine = N(4)-methylcytidine(1402) in 16S rRNA + S-adenosyl-L-homocysteine + H(+). Specifically methylates the N4 position of cytidine in position 1402 (C1402) of 16S rRNA. The sequence is that of Ribosomal RNA small subunit methyltransferase H from Haemophilus ducreyi (strain 35000HP / ATCC 700724).